We begin with the raw amino-acid sequence, 598 residues long: Dihydroxy-acid dehydratase astD, mitochondrial (598 aa).

Residues 1-111 (MFASRIRSRA…HRAGLVPMRF (111 aa)) constitute a mitochondrion transit peptide. The segment at 23 to 50 (RLPASTTGRRYKSDETLNRVSSKITQPK) is disordered. A compositionally biased stretch (polar residues) spans 40 to 50 (NRVSSKITQPK). A [2Fe-2S] cluster-binding site is contributed by Cys-86. A Mg(2+)-binding site is contributed by Asp-118. Cys-159 serves as a coordination point for [2Fe-2S] cluster. Asp-160 is a Mg(2+) binding site. Residue Cys-232 participates in [2Fe-2S] cluster binding. Residue Glu-485 participates in Mg(2+) binding. Ser-511 (proton acceptor) is an active-site residue.

The protein belongs to the IlvD/Edd family. [2Fe-2S] cluster serves as cofactor. Mg(2+) is required as a cofactor.

It localises to the mitochondrion. It catalyses the reaction (2R)-2,3-dihydroxy-3-methylbutanoate = 3-methyl-2-oxobutanoate + H2O. It carries out the reaction (2R,3R)-2,3-dihydroxy-3-methylpentanoate = (S)-3-methyl-2-oxopentanoate + H2O. It participates in amino-acid biosynthesis; L-isoleucine biosynthesis; L-isoleucine from 2-oxobutanoate: step 3/4. It functions in the pathway amino-acid biosynthesis; L-valine biosynthesis; L-valine from pyruvate: step 3/4. DHAD activity is not inhibited by the dihydroxyacid dehydratase inhibitor aspterric acid (AA). Its function is as follows. Dihydroxyacid dehydratase; part of the gene cluster that mediates the biosynthesis of the sesquiterpenoid aspterric acid (AA), an inhibitor of dihydroxy-acid dehydratase (DHAD) effective as an herbicide. Performs the third step in the common pathway leading to biosynthesis of branched-chain amino acids. Catalyzes the dehydration of (2R,3R)-2,3-dihydroxy-3-methylpentanoate (2,3-dihydroxy-3-methylvalerate) into 2-oxo-3-methylpentanoate (2-oxo-3-methylvalerate) and of (2R)-2,3-dihydroxy-3-methylbutanoate (2,3-dihydroxyisovalerate) into 2-oxo-3-methylbutanoate (2-oxoisovalerate), the penultimate precursor to L-isoleucine and L-valine, respectively. AstD confers self-resistance in the presence of the dihydroxyacid dehydratase inhibitor aspterric acid (AA) produced by the ast cluster. This Aspergillus terreus (strain NIH 2624 / FGSC A1156) protein is Dihydroxy-acid dehydratase astD, mitochondrial.